We begin with the raw amino-acid sequence, 305 residues long: NAD kinase 2 (305 aa).

Asp78 acts as the Proton acceptor in catalysis. NAD(+) is bound by residues 78-79, 152-153, Asp182, 193-198, and Asn251; these read DG, NE, and TAYSLS.

It belongs to the NAD kinase family. Requires a divalent metal cation as cofactor.

The protein resides in the cytoplasm. The enzyme catalyses NAD(+) + ATP = ADP + NADP(+) + H(+). Functionally, involved in the regulation of the intracellular balance of NAD and NADP, and is a key enzyme in the biosynthesis of NADP. Catalyzes specifically the phosphorylation on 2'-hydroxyl of the adenosine moiety of NAD to yield NADP. Functions as a growth repressor under light-activated heterotrophic growth conditions and light and dark cycle conditions in the presence of glucose. NADP(H)/NAD(H) maintenance by slr0400 probably plays a significant role in modulating glycolysis and the TCA cycle to repress the growth rate and maintain the photosynthetic capacity. This Synechocystis sp. (strain ATCC 27184 / PCC 6803 / Kazusa) protein is NAD kinase 2.